We begin with the raw amino-acid sequence, 234 residues long: Ribosomal RNA small subunit methyltransferase G (234 aa).

Residues Gly-74, Phe-79, 125-126, and Arg-144 each bind S-adenosyl-L-methionine; that span reads AE.

It belongs to the methyltransferase superfamily. RNA methyltransferase RsmG family.

It localises to the cytoplasm. In terms of biological role, specifically methylates the N7 position of a guanine in 16S rRNA. This Roseiflexus castenholzii (strain DSM 13941 / HLO8) protein is Ribosomal RNA small subunit methyltransferase G.